We begin with the raw amino-acid sequence, 332 residues long: 5-dehydro-2-deoxygluconokinase 1 (332 aa).

Belongs to the carbohydrate kinase PfkB family.

The catalysed reaction is 5-dehydro-2-deoxy-D-gluconate + ATP = 6-phospho-5-dehydro-2-deoxy-D-gluconate + ADP + H(+). It participates in polyol metabolism; myo-inositol degradation into acetyl-CoA; acetyl-CoA from myo-inositol: step 5/7. Functionally, catalyzes the phosphorylation of 5-dehydro-2-deoxy-D-gluconate (2-deoxy-5-keto-D-gluconate or DKG) to 6-phospho-5-dehydro-2-deoxy-D-gluconate (DKGP). In Bacillus cereus (strain ZK / E33L), this protein is 5-dehydro-2-deoxygluconokinase 1.